The following is a 275-amino-acid chain: 4,5-DOPA dioxygenase extradiol 1 (275 aa).

Zn(2+)-binding residues include histidine 22, histidine 60, histidine 182, and histidine 236.

Belongs to the DODA-type extradiol aromatic ring-opening dioxygenase family. Zn(2+) serves as cofactor.

The catalysed reaction is L-dopa + O2 = 4-(L-alanin-3-yl)-2-hydroxy-cis,cis-muconate 6-semialdehyde + H(+). The protein operates within pigment biosynthesis; betalain biosynthesis. Functionally, opens the cyclic ring of dihydroxy-phenylalanine (DOPA) between carbons 4 and 5, thus producing an unstable seco-DOPA that rearranges nonenzymatically to betalamic acid. This is 4,5-DOPA dioxygenase extradiol 1 from Beta vulgaris (Sugar beet).